Reading from the N-terminus, the 147-residue chain is UPF0735 ACT domain-containing protein RBAM_024960 (147 aa).

In terms of domain architecture, ACT spans 70–145 (TLFFHLEDRS…FIEKVEILGS (76 aa)).

Belongs to the UPF0735 family.

This is UPF0735 ACT domain-containing protein RBAM_024960 from Bacillus velezensis (strain DSM 23117 / BGSC 10A6 / LMG 26770 / FZB42) (Bacillus amyloliquefaciens subsp. plantarum).